The sequence spans 3969 residues: Histone-lysine N-methyltransferase 2A (3969 aa).

3 disordered regions span residues 1-108, 132-253, and 301-352; these read MAHS…LLRV, VFGE…EDSL, and RRRG…RQSP. The Menin-binding motif (MBM) signature appears at 6-25; the sequence is RWRFPARPGTTGGGGGGGRR. Residues 15-29 are compositionally biased toward gly residues; that stretch reads TTGGGGGGGRRGLGG. Composition is skewed to low complexity over residues 59–69 and 77–104; these read AVAAAAAAAGS and GAAA…SGPA. Positions 123-134 match the Integrase domain-binding motif 1 (IBM1) motif; the sequence is GTNLRRFRAVFG. 2 positions are modified to phosphoserine; by CK2: S136 and S142. The Integrase domain-binding motif 2 (IBM2) signature appears at 147 to 152; that stretch reads QFLGFG. At S153 the chain carries Phosphoserine. A DNA-binding region (a.T hook 1) is located at residues 169–180; it reads KTSPRKPRGRPR. At S197 the chain carries Phosphoserine. Composition is skewed to basic and acidic residues over residues 202-220 and 237-253; these read SETK…SIEK and HGKD…EDSL. A DNA-binding region (a.T hook 2) is located at residues 217–227; sequence SIEKKRGRPPT. K239 is subject to N6-acetyllysine. The a.T hook 3 DNA-binding region spans 301–309; sequence RRRGRPPST. The segment covering 323-347 has biased composition (basic and acidic residues); the sequence is ELEKPQKVRKDKEGTPPLTKEDKTV. An N6-acetyllysine modification is found at K373. A disordered region spans residues 445 to 585; sequence STPNSRFSAP…SSISDHTPWL (141 aa). Residues 452 to 491 show a composition bias toward low complexity; the sequence is SAPSCGSSEKSSAASQHSSQMSSDSSRSSSPSVDTSTDSQ. Residue S518 is modified to Phosphoserine. Positions 546-559 are enriched in low complexity; that stretch reads LSTLQSAPQQQTSS. Pro residues predominate over residues 560–573; that stretch reads SPPPPLLTPPPPLQ. The residue at position 636 (K636) is an N6-acetyllysine. The residue at position 680 (S680) is a Phosphoserine. Disordered stretches follow at residues 713 to 780, 798 to 949, 1038 to 1066, and 1106 to 1166; these read ESVT…SSSL, FPSH…TSVT, EKSK…VRGP, and SSMG…VPED. Residues 716–732 show a composition bias toward polar residues; that stretch reads TLPSNRTSAGTSSSGVS. Residues 762–780 show a composition bias toward low complexity; that stretch reads LSSSELSPLTPPSSVSSSL. Polar residues predominate over residues 798–808; it reads FPSHSLTQSGE. Residues 820 to 841 show a composition bias toward low complexity; it reads TSAPAEPFSSSSPTPLFPWFTP. Phosphothreonine is present on T840. The segment covering 846-890 has biased composition (basic and acidic residues); sequence ERGRNKDKAPEELSKDRDADKSVEKDKSRERDREREKENKRESRK. A phosphoserine mark is found at S926 and S1056. A compositionally biased stretch (polar residues) spans 1043 to 1062; the sequence is LKQTDQPKAQGQESDSSETS. Position 1130 is an N6-acetyllysine (K1130). The CXXC-type zinc-finger motif lies at 1147-1195; sequence KKGRRSRRCGQCPGCQVPEDCGVCTNCLDKPKFGGRNIKKQCCKMRKCQ. Zn(2+) contacts are provided by C1155, C1158, C1161, C1167, C1170, C1173, C1189, and C1194. A disordered region spans residues 1200–1375; it reads MPSKAYLQKQ…PPVNKQENAG (176 aa). Residues 1220 to 1232 are compositionally biased toward basic and acidic residues; the sequence is SKTSEKKDSKESS. Positions 1233–1243 are enriched in low complexity; that stretch reads VVKNVVDSSQK. Position 1235 is an N6-acetyllysine (K1235). Over residues 1248–1273 the composition is skewed to basic and acidic residues; sequence AREDPAPKKSSSEPPPRKPVEEKSEE. Over residues 1284–1300 the composition is skewed to polar residues; sequence KQATTPASRKSSKQVSQ. The segment covering 1304–1313 has biased composition (pro residues); the sequence is VIPPQPPTTG. 3 consecutive PHD-type zinc fingers follow at residues 1431 to 1482, 1479 to 1533, and 1566 to 1627; these read RVVC…CKFC, CKFC…CVRC, and GNFC…CTER. An interaction with histone H3K4me3 region spans residues 1584–1600; that stretch reads KMMQCGKCDRWVHSKCE. One can recognise a Bromo domain in the interval 1635–1765; sequence ALEKELQISL…SFFIRQMERV (131 aa). Disordered regions lie at residues 1663–1713 and 1806–1869; these read YRQA…GVKR and QERE…GIED. Over residues 1826–1847 the composition is skewed to pro residues; it reads APKPKGPGEPDSPTPLHPPTPP. Phosphoserine is present on S1837. T1845 carries the phosphothreonine modification. S1858 bears the Phosphoserine mark. Residues 1870-1910 form a C2HC pre-PHD-type zinc finger; the sequence is NRQCALCLTYGDDSANDAGRLLYIGQNEWTHVNCALWSAEV. The PHD-type 4 zinc finger occupies 1931-1978; the sequence is LRCEFCQKPGATVGCCLTSCTSNYHFMCSRAKNCVFLDDKKVYCQRHR. The FYR N-terminal domain occupies 2018–2074; sequence NIHMMIGSMTIDCLGILNDLSDCEDKLFPIGYQCSRVYWSTTDARKRCVYTCKIVEC. Disordered regions lie at residues 2081-2133, 2145-2232, 2275-2333, 2373-2460, 2475-2618, 2647-2675, and 2713-2821; these read PDIN…TSGS, IRTP…TTGT, NKNS…KLAP, RGQR…EGNL, GQRP…RYPR, FYSS…STSD, and KISQ…KNLL. A compositionally biased stretch (polar residues) spans 2095 to 2115; the sequence is IAHSPTSFTESSSKESQNTAE. S2098 bears the Phosphoserine mark. At T2147 the chain carries Phosphothreonine. S2151 and S2201 each carry phosphoserine. Residues 2214–2232 are compositionally biased toward polar residues; sequence RTGNTYSRNNVSSVSTTGT. Low complexity predominate over residues 2283-2302; the sequence is SSSSEMKQSSASDLVSKSSS. 2 stretches are compositionally biased toward polar residues: residues 2310–2319 and 2406–2421; these read VLSSKSSEGS and GMSN…MGSS. The span at 2432-2442 shows a compositional bias: basic and acidic residues; it reads SCKETFKEKHS. A Phosphothreonine modification is found at T2525. Residue K2528 forms a Glycyl lysine isopeptide (Lys-Gly) (interchain with G-Cter in SUMO2) linkage. Polar residues-rich tracts occupy residues 2543–2563 and 2573–2592; these read SPAS…SASE and PSPN…QNLP. S2611 carries the phosphoserine modification. The segment covering 2726-2741 has biased composition (polar residues); it reads SDTSVTATTRKSSQIP. Basic and acidic residues predominate over residues 2744 to 2782; the sequence is NGKENGTENLKIDRPEDAGEKEHVTKSSVGHKNEPKMDN. Over residues 2784 to 2795 the composition is skewed to polar residues; the sequence is HSVSRVKTQGQD. Phosphoserine is present on S2796. The segment covering 2796 to 2805 has biased composition (low complexity); it reads SLEAQLSSLE. Residues 2812-2821 are compositionally biased toward polar residues; it reads TSTPSDKNLL. Positions 2847-2855 match the 9aaTAD motif; the sequence is SDIMDFVLK. A Phosphoserine modification is found at S2955. N6-acetyllysine is present on K2958. Disordered stretches follow at residues 2961-3064 and 3166-3244; these read TITE…NAAV and PAAT…SNIA. 2 stretches are compositionally biased toward polar residues: residues 2963 to 2972 and 3016 to 3030; these read TEKSVASSES and HGNN…STPG. S3036 carries the post-translational modification Phosphoserine. A compositionally biased stretch (polar residues) spans 3039–3064; that stretch reads VPIQNQKYVPNSTDSPGPSQISNAAV. Over residues 3171 to 3182 the composition is skewed to low complexity; that stretch reads SSFPPNISNPPS. The segment covering 3198–3216 has biased composition (polar residues); that stretch reads VSESSQRTDLSTTVATPSS. Residues 3218–3233 are compositionally biased toward basic residues; it reads LKKRPISRLQTRKNKK. T3372 carries the post-translational modification Phosphothreonine. K3462 carries the post-translational modification N6-acetyllysine. Disordered regions lie at residues 3464–3608 and 3620–3643; these read GIHS…GQPA and TQNP…SNFS. Positions 3476–3489 are enriched in polar residues; that stretch reads SGPQVSNFTQTVDA. Low complexity predominate over residues 3508 to 3529; that stretch reads SPTSPGGSPSSPSSGQRSASPS. Phosphoserine is present on residues S3511, S3515, and S3527. A compositionally biased stretch (polar residues) spans 3591-3603; sequence QDTASVEQSSQKE. An FYR C-terminal domain is found at 3666–3747; the sequence is KKGLVFEISS…KHCRNYKFRF (82 aa). The WDR5 interaction motif (WIN) signature appears at 3762 to 3767; it reads GSARAE. The tract at residues 3785–3808 is disordered; it reads HRQPPEYNPNDEEEEEVQLKSARR. The SET domain maps to 3829 to 3945; it reads EAVGVYRSPI…RGEELTYDYK (117 aa). S-adenosyl-L-methionine contacts are provided by H3839 and R3841. An S-methylcysteine; by autocatalysis modification is found at C3882. Residues Y3883 and 3906 to 3907 contribute to the S-adenosyl-L-methionine site; that span reads NH. Zn(2+)-binding residues include C3909 and C3957. The Post-SET domain occupies 3953 to 3969; sequence NKLPCNCGAKKCRKFLN. Residue N3958 participates in S-adenosyl-L-methionine binding. Residues C3959 and C3964 each contribute to the Zn(2+) site.

The protein belongs to the class V-like SAM-binding methyltransferase superfamily. Histone-lysine methyltransferase family. TRX/MLL subfamily. In terms of assembly, MLL cleavage product N320 heterodimerizes with MLL cleavage product C180 (via SET and FYRC domains). Component of some MLL1/MLL complex, at least composed of the core components KMT2A/MLL1, ASH2L, HCFC1/HCF1, HCFC2, WDR5, DPY30 and RBBP5, as well as the facultative components BACC1, CHD8, E2F6, HSP70, INO80C, KANSL1, LAS1L, MAX, MCRS1, MEN1, MGA, KAT8/MOF, PELP1, PHF20, PRP31, RING2, RUVB1/TIP49A, RUVB2/TIP49B, SENP3, TAF1, TAF4, TAF6, TAF7, TAF9 and TEX10. Forms a core complex with the evolutionary conserved subcomplex WRAD composed of WDR5, RBBP5, ASH2L/ASH2 and DPY30 subunits; WRAD differentially stimulates the methyltransferase activity. Interacts (via WIN motif) with WDR5; the interaction is direct. Interaction with WDR5 is required for stable interaction with ASH2L and RBBP5, and thereby also for optimal histone methyltransferase activity. Interacts with KAT8/MOF; the interaction is direct. Interacts with SBF1 and PPP1R15A. Interacts with ZNF335. Interacts with CLOCK and BMAL1 in a circadian manner. Interacts with PPIE; this results in decreased histone H3 methyltransferase activity. Interacts with CREBBP. Interacts with the WRAD complex composed of WDR5, RBBP5, ASH2L and DPY30. Interacts (via MBM motif) with MEN1. Interacts (via IBM motifs) with PSIP1 (via IBD domain) with moderate affinity whereas the KMT2A-MEN1 complex interacts with a greater affinity; MEN1 enhances interaction of KMT2A with PSIP1. Phosphorylation increases its affinity for PSIP1. Forms a complex with CREBBP and CREB1. (Microbial infection) Interacts with herpes virus 8/HHV-8 protein LANA1; this interaction regulates the MLL1 histone methyltransferase activity on viral DNA. In terms of processing, proteolytic cleavage by TASP1 generates MLL cleavage product N320 and MLL cleavage product C180, which reassemble through a non-covalent association. 2 cleavage sites exist, cleavage site 1 (CS1) and cleavage site 2 (CS2), to generate MLL cleavage products N320 and C180. CS2 is the major site. Post-translationally, phosphorylation increases its interaction with PSIP1. Auto-methylated at Cys-3882: auto-methylation is inhibited by the WRAD complex and unmodified histone H3. Heart, lung, brain and T- and B-lymphocytes.

Its subcellular location is the nucleus. It catalyses the reaction L-lysyl(4)-[histone H3] + S-adenosyl-L-methionine = N(6)-methyl-L-lysyl(4)-[histone H3] + S-adenosyl-L-homocysteine + H(+). The catalysed reaction is N(6)-methyl-L-lysyl(4)-[histone H3] + S-adenosyl-L-methionine = N(6),N(6)-dimethyl-L-lysyl(4)-[histone H3] + S-adenosyl-L-homocysteine + H(+). The enzyme catalyses L-cysteinyl-[protein] + S-adenosyl-L-methionine = S-methyl-L-cysteinyl-[protein] + S-adenosyl-L-homocysteine + H(+). In terms of biological role, histone methyltransferase that plays an essential role in early development and hematopoiesis. Catalytic subunit of the MLL1/MLL complex, a multiprotein complex that mediates both methylation of 'Lys-4' of histone H3 (H3K4me) complex and acetylation of 'Lys-16' of histone H4 (H4K16ac). Catalyzes methyl group transfer from S-adenosyl-L-methionine to the epsilon-amino group of 'Lys-4' of histone H3 (H3K4) via a non-processive mechanism. Part of chromatin remodeling machinery predominantly forms H3K4me1 and H3K4me2 methylation marks at active chromatin sites where transcription and DNA repair take place. Has weak methyltransferase activity by itself, and requires other component of the MLL1/MLL complex to obtain full methyltransferase activity. Has no activity toward histone H3 phosphorylated on 'Thr-3', less activity toward H3 dimethylated on 'Arg-8' or 'Lys-9', while it has higher activity toward H3 acetylated on 'Lys-9'. Binds to unmethylated CpG elements in the promoter of target genes and helps maintain them in the nonmethylated state. Required for transcriptional activation of HOXA9. Promotes PPP1R15A-induced apoptosis. Plays a critical role in the control of circadian gene expression and is essential for the transcriptional activation mediated by the CLOCK-BMAL1 heterodimer. Establishes a permissive chromatin state for circadian transcription by mediating a rhythmic methylation of 'Lys-4' of histone H3 (H3K4me) and this histone modification directs the circadian acetylation at H3K9 and H3K14 allowing the recruitment of CLOCK-BMAL1 to chromatin. Also has auto-methylation activity on Cys-3882 in absence of histone H3 substrate. The polypeptide is Histone-lysine N-methyltransferase 2A (KMT2A) (Homo sapiens (Human)).